Reading from the N-terminus, the 404-residue chain is Cysteine desulfurase IscS (404 aa).

Pyridoxal 5'-phosphate contacts are provided by residues 75 to 76 (AT), Asn155, Gln183, and 203 to 205 (SAH). The residue at position 206 (Lys206) is an N6-(pyridoxal phosphate)lysine. Thr243 lines the pyridoxal 5'-phosphate pocket. Catalysis depends on Cys328, which acts as the Cysteine persulfide intermediate. Cys328 is a binding site for [2Fe-2S] cluster.

This sequence belongs to the class-V pyridoxal-phosphate-dependent aminotransferase family. NifS/IscS subfamily. In terms of assembly, homodimer. Forms a heterotetramer with IscU, interacts with other sulfur acceptors. The cofactor is pyridoxal 5'-phosphate.

It localises to the cytoplasm. It catalyses the reaction (sulfur carrier)-H + L-cysteine = (sulfur carrier)-SH + L-alanine. Its pathway is cofactor biosynthesis; iron-sulfur cluster biosynthesis. Functionally, master enzyme that delivers sulfur to a number of partners involved in Fe-S cluster assembly, tRNA modification or cofactor biosynthesis. Catalyzes the removal of elemental sulfur atoms from cysteine to produce alanine. Functions as a sulfur delivery protein for Fe-S cluster synthesis onto IscU, an Fe-S scaffold assembly protein, as well as other S acceptor proteins. This chain is Cysteine desulfurase IscS, found in Ruthia magnifica subsp. Calyptogena magnifica.